We begin with the raw amino-acid sequence, 225 residues long: MYSIKTDHKLMPRERLIRLGPEKLSNQEQLAILLRTGNKEKHVLELSAYLLSSLDSLADLKKFSLQELQRLSGIGKVKAIEIKAMLELADRIQIAGQAVADPVLSSAQVAEKMMIELGDKQQEHLVAIYLDSQNKIIEEKTIFIGTVRKSIAEPREILYYACKNMATSLIVVHNHPSGLTKPSANDYHFTEKIKRSCDYLGLICLDHIIVSKYDYYSFREKSDLF.

The MPN domain occupies 102–224 (PVLSSAQVAE…YYSFREKSDL (123 aa)). Histidine 173, histidine 175, and aspartate 186 together coordinate Zn(2+). The JAMM motif signature appears at 173–186 (HNHPSGLTKPSAND).

This sequence belongs to the UPF0758 family.

This chain is UPF0758 protein SEQ_1136, found in Streptococcus equi subsp. equi (strain 4047).